The following is a 476-amino-acid chain: uncharacterized protein (476 aa).

A run of 10 helical transmembrane segments spans residues 4–24 (FFSFINSVLWGSVMIYLLFGA), 81–101 (ALAITAGGPGAVFWMWVAAFI), 141–161 (WMGVLFAVFLLIAYGIIFSGV), 174–194 (FDFPPLVTGIILAVFTLLAIT), 207–227 (FVPLMAIIWVLTSLVICVMNI), 233–253 (VIWSIFESAFGWQEAAGGAAG), 300–320 (MIGIFIDTLVICTASAMLILL), 351–371 (FVTLVVILFAFSSIVANYIYA), 391–411 (ICTFATVIGGTLLSLPLMWQL), and 414–434 (IIMACMAITNLTAILLLSPVV).

It belongs to the alanine or glycine:cation symporter (AGCS) (TC 2.A.25) family.

It localises to the cell inner membrane. This is an uncharacterized protein from Escherichia coli (strain K12).